Consider the following 230-residue polypeptide: UPF0758 protein Glov_0523 (230 aa).

The MPN domain maps to 108–230 (RFTSPAQVFD…YFSFVESGLL (123 aa)). Zn(2+) is bound by residues H179, H181, and D192. A JAMM motif motif is present at residues 179 to 192 (HNHPSGDPAPSRED).

Belongs to the UPF0758 family.

In Trichlorobacter lovleyi (strain ATCC BAA-1151 / DSM 17278 / SZ) (Geobacter lovleyi), this protein is UPF0758 protein Glov_0523.